A 436-amino-acid chain; its full sequence is Probable transporter MCH1 (436 aa).

A run of 7 helical transmembrane segments spans residues 27 to 47 (VVAFLISLLSCLVAGSILLFT), 66 to 86 (MISSLSALGMYFCLPVLGYLA), 93 to 113 (LLSLFSIWFFCPSYFVNSYLV), 119 to 139 (SVIGFCVCFCFIGLATSSLYF), 155 to 175 (LAISLPITCYGLSALLGAQIL), 188 to 208 (LEVVFSFFAWLYLVVGIASFV), and 249 to 269 (FVSFVKDPSAWILLVSLILNI). N278 carries N-linked (GlcNAc...) asparagine glycosylation. Helical transmembrane passes span 295–312 (VSIMAASSTGARLLLGVL), 325–345 (LLVVVIVVGVAGQMSETSAIL), 347–367 (GVSYGGMFTIYPTIVASIWGI), 373–393 (TWGSFMVAPALGSVIFSMFYG), and 410–430 (TAGAMIVSCIFVLLAWKIWYA).

The protein belongs to the major facilitator superfamily.

It localises to the vacuole membrane. Functionally, probable transporter. The sequence is that of Probable transporter MCH1 (MCH1) from Candida albicans (strain SC5314 / ATCC MYA-2876) (Yeast).